An 86-amino-acid chain; its full sequence is Serine protease inhibitor Kazal-type 9 (86 aa).

An N-terminal signal peptide occupies residues 1–19 (MRATAIVLLLALTLATMFS). Residues 26 to 86 (TKQMVDCSHY…TLKFVHFGKC (61 aa)) enclose the Kazal-like domain. Intrachain disulfides connect cysteine 32/cysteine 68, cysteine 46/cysteine 65, and cysteine 54/cysteine 86.

Dimer. Interacts with KLK5 and KLK8. Skin. Highly expressed at sites of hyperkeratosis. Also detected in thymus, tonsils, testis, pancreas, liver, placenta and brain. Expressed at stratum granulosum and stratum corneum at palmar and plantar sites (at protein level).

The protein resides in the secreted. Serine protease inhibitor which specifically inhibits KLK5. May contribute to the regulation of the desquamation process in skin by inhibiting KLK5. The protein is Serine protease inhibitor Kazal-type 9 (SPINK9) of Homo sapiens (Human).